Consider the following 356-residue polypeptide: Septin-12 (356 aa).

A disordered region spans residues Met-1 to Glu-23. Low complexity predominate over residues Pro-7 to Ser-16. Residues Thr-44–Glu-315 enclose the Septin-type G domain. The interval Thr-44–His-317 is interaction with SEPTIN7. Residues Gly-54–Ser-61 are G1 motif. GTP contacts are provided by residues Gly-54–Ser-61, Thr-87, Gly-113, Arg-193–Glu-201, Gly-249, and Arg-264. The G3 motif stretch occupies residues Asp-110–Gly-113. Positions Ala-192–Asp-195 are G4 motif. The segment at Val-256–Cys-356 is self-association (via N-terminus) to polymerize octameric septin 12-7-6-2/4-2/4-6-7-12 filaments. Positions Pro-330–Cys-356 are disordered.

This sequence belongs to the TRAFAC class TrmE-Era-EngA-EngB-Septin-like GTPase superfamily. Septin GTPase family. As to quaternary structure, septins polymerize into heterooligomeric protein complexes that form filaments, and can associate with cellular membranes, actin filaments and microtubules. GTPase activity is required for filament formation. Interacts with SEPTIN6 and SEPTIN11. Self-associates. Component of a octameric complex consisting of SEPTIN12, SEPTIN7, SEPTIN6 and SEPTIN2 or SEPTIN4 in the order 12-7-6-2-2-6-7-12 or 12-7-6-4-4-6-7-12 and located in the sperm annulus; the octamer polymerizes into filaments via the SEPTIN12 N- and C-termini; the SEPTIN12:SEPTIN7 association is mediated by the GTP-binding domains. Interacts with SPAG4 and LMNB1. Associates with alpha- and beta-tubulins. In terms of tissue distribution, predominantly expressed in testis and epididymis. Component of the sperm tail annulus (at protein level).

It localises to the cytoplasm. The protein resides in the cytoskeleton. Its subcellular location is the spindle. The protein localises to the cell projection. It is found in the cilium. It localises to the flagellum. Functionally, filament-forming cytoskeletal GTPase. May play a role in cytokinesis (Potential). Involved in spermatogenesis. Involved in the morphogenesis of sperm heads and the elongation of sperm tails probably implicating the association with alpha- and beta-tubulins. Forms a filamentous structure with SEPTIN7, SEPTIN6, SEPTIN2 and probably SEPTIN4 at the sperm annulus which is required for the structural integrity and motility of the sperm tail during postmeiotic differentiation. This chain is Septin-12, found in Rattus norvegicus (Rat).